A 355-amino-acid chain; its full sequence is Peptide chain release factor 1 (355 aa).

Glutamine 232 is subject to N5-methylglutamine.

The protein belongs to the prokaryotic/mitochondrial release factor family. Methylated by PrmC. Methylation increases the termination efficiency of RF1.

It is found in the cytoplasm. Its function is as follows. Peptide chain release factor 1 directs the termination of translation in response to the peptide chain termination codons UAG and UAA. The polypeptide is Peptide chain release factor 1 (Thermobifida fusca (strain YX)).